A 232-amino-acid chain; its full sequence is 2-C-methyl-D-erythritol 4-phosphate cytidylyltransferase (232 aa).

It belongs to the IspD/TarI cytidylyltransferase family. IspD subfamily.

The catalysed reaction is 2-C-methyl-D-erythritol 4-phosphate + CTP + H(+) = 4-CDP-2-C-methyl-D-erythritol + diphosphate. It participates in isoprenoid biosynthesis; isopentenyl diphosphate biosynthesis via DXP pathway; isopentenyl diphosphate from 1-deoxy-D-xylulose 5-phosphate: step 2/6. In terms of biological role, catalyzes the formation of 4-diphosphocytidyl-2-C-methyl-D-erythritol from CTP and 2-C-methyl-D-erythritol 4-phosphate (MEP). This Rhodococcus erythropolis (strain PR4 / NBRC 100887) protein is 2-C-methyl-D-erythritol 4-phosphate cytidylyltransferase.